A 140-amino-acid chain; its full sequence is D-ribose pyranase (140 aa).

Catalysis depends on His20, which acts as the Proton donor. Substrate-binding positions include Asp28, His99, and Tyr121–Ser123.

The protein belongs to the RbsD / FucU family. RbsD subfamily. As to quaternary structure, homodecamer.

The protein localises to the cytoplasm. The enzyme catalyses beta-D-ribopyranose = beta-D-ribofuranose. It participates in carbohydrate metabolism; D-ribose degradation; D-ribose 5-phosphate from beta-D-ribopyranose: step 1/2. Catalyzes the interconversion of beta-pyran and beta-furan forms of D-ribose. This chain is D-ribose pyranase, found in Pseudothermotoga lettingae (strain ATCC BAA-301 / DSM 14385 / NBRC 107922 / TMO) (Thermotoga lettingae).